The chain runs to 146 residues: NADH-quinone oxidoreductase subunit A (146 aa).

The next 3 membrane-spanning stretches (helical) occupy residues 14-34 (FALF…GGFL), 68-88 (LVAM…AWAV), and 96-116 (IGFI…IYLV).

Belongs to the complex I subunit 3 family. As to quaternary structure, NDH-1 is composed of 13 different subunits. Subunits NuoA, H, J, K, L, M, N constitute the membrane sector of the complex.

It is found in the cell inner membrane. The enzyme catalyses a quinone + NADH + 5 H(+)(in) = a quinol + NAD(+) + 4 H(+)(out). In terms of biological role, NDH-1 shuttles electrons from NADH, via FMN and iron-sulfur (Fe-S) centers, to quinones in the respiratory chain. The immediate electron acceptor for the enzyme in this species is believed to be ubiquinone. Couples the redox reaction to proton translocation (for every two electrons transferred, four hydrogen ions are translocated across the cytoplasmic membrane), and thus conserves the redox energy in a proton gradient. This Pectobacterium atrosepticum (strain SCRI 1043 / ATCC BAA-672) (Erwinia carotovora subsp. atroseptica) protein is NADH-quinone oxidoreductase subunit A.